Consider the following 35-residue polypeptide: Jingzhaotoxin F5-21.66 (35 aa).

Cystine bridges form between C2–C16, C9–C21, and C15–C29.

It belongs to the neurotoxin 10 (Hwtx-1) family. 48 (Jztx-F5) subfamily. In terms of tissue distribution, expressed by the venom gland.

The protein localises to the secreted. Probable ion channel inhibitor. This is Jingzhaotoxin F5-21.66 from Chilobrachys guangxiensis (Chinese earth tiger tarantula).